Reading from the N-terminus, the 230-residue chain is uncharacterized protein (230 aa).

Residues 19–39 form a helical membrane-spanning segment; the sequence is GIFQVLLQLVLAMMTVWDFAG. A glycan (N-linked (GlcNAc...) asparagine; by host) is linked at Asn41. The helical transmembrane segment at 55–75 threads the bilayer; the sequence is SFLLVLYTGLKQILEYMFSIC. N-linked (GlcNAc...) asparagine; by host glycosylation is found at Asn86, Asn157, Asn168, and Asn182. The stretch at 172–196 forms a coiled coil; that stretch reads TNLHKYQNDENDTEEDSEDIEKNSD. The segment at 178 to 205 is disordered; that stretch reads QNDENDTEEDSEDIEKNSDPKENSDIDS. Positions 180 to 190 are enriched in acidic residues; it reads DENDTEEDSED. Positions 191-201 are enriched in basic and acidic residues; the sequence is IEKNSDPKENS.

The protein resides in the membrane. This is an uncharacterized protein from Acanthamoeba polyphaga mimivirus (APMV).